The sequence spans 407 residues: MKPTVWHHLRLCPHGHPDETIDDAAIAVDETGTIVWLGAMSALPHGYAHWQREDLHGAWVTPGLVDCHTHLVYGGTRADEFAQRLAGVSYEEIARQGGGIVSTVRATRAADETTLFVQAAARLQPLLAEGVTAIEIKSGYGLDLASERKMLRVARQLGERFPVTVYTTFLGAHALPPEYAGRADAYIDEVCDRMLPALADEGLVDAVDVFCERIGFSLAQTERVFEAATRRGLPVKLHAEQLSNAGGTALAARYRALSADHLEFLDEAGIEAMKAAGTVAVLLPGAYYFIRETQLPPIELLRKHGVPIALATDHNPGTSPLESLLLTLNMGCTLFRMTVPEVLQGVTRHAAAALGRADRHGALEVGRQADFAAWSVGSLAELAYWIGRPLCEQVVRGGTTVFRRMNG.

The Fe(3+) site is built by H68 and H70. Zn(2+)-binding residues include H68 and H70. Positions 77, 140, and 173 each coordinate 4-imidazolone-5-propanoate. Y140 serves as a coordination point for N-formimidoyl-L-glutamate. H238 contacts Fe(3+). H238 is a Zn(2+) binding site. Q241 provides a ligand contact to 4-imidazolone-5-propanoate. Residue D313 participates in Fe(3+) binding. Position 313 (D313) interacts with Zn(2+). N315 and G317 together coordinate N-formimidoyl-L-glutamate. T318 provides a ligand contact to 4-imidazolone-5-propanoate.

It belongs to the metallo-dependent hydrolases superfamily. HutI family. Zn(2+) is required as a cofactor. Requires Fe(3+) as cofactor.

The protein localises to the cytoplasm. The catalysed reaction is 4-imidazolone-5-propanoate + H2O = N-formimidoyl-L-glutamate. Its pathway is amino-acid degradation; L-histidine degradation into L-glutamate; N-formimidoyl-L-glutamate from L-histidine: step 3/3. Its function is as follows. Catalyzes the hydrolytic cleavage of the carbon-nitrogen bond in imidazolone-5-propanoate to yield N-formimidoyl-L-glutamate. It is the third step in the universal histidine degradation pathway. The polypeptide is Imidazolonepropionase (Burkholderia lata (strain ATCC 17760 / DSM 23089 / LMG 22485 / NCIMB 9086 / R18194 / 383)).